Here is a 210-residue protein sequence, read N- to C-terminus: Probable septum site-determining protein MinC (210 aa).

Belongs to the MinC family. In terms of assembly, interacts with MinD and FtsZ.

Its function is as follows. Cell division inhibitor that blocks the formation of polar Z ring septums. Rapidly oscillates between the poles of the cell to destabilize FtsZ filaments that have formed before they mature into polar Z rings. Prevents FtsZ polymerization. In Thermotoga neapolitana (strain ATCC 49049 / DSM 4359 / NBRC 107923 / NS-E), this protein is Probable septum site-determining protein MinC.